The following is a 403-amino-acid chain: Argininosuccinate synthase (403 aa).

Residues 13-21 and alanine 40 each bind ATP; that span reads AYSGGLDTS. 2 residues coordinate L-citrulline: tyrosine 91 and serine 96. Glycine 121 lines the ATP pocket. L-aspartate contacts are provided by threonine 123, asparagine 127, and aspartate 128. An L-citrulline-binding site is contributed by asparagine 127. The L-citrulline site is built by arginine 131, serine 180, serine 189, glutamate 265, and tyrosine 277.

This sequence belongs to the argininosuccinate synthase family. Type 1 subfamily. Homotetramer.

It is found in the cytoplasm. The enzyme catalyses L-citrulline + L-aspartate + ATP = 2-(N(omega)-L-arginino)succinate + AMP + diphosphate + H(+). It functions in the pathway amino-acid biosynthesis; L-arginine biosynthesis; L-arginine from L-ornithine and carbamoyl phosphate: step 2/3. In Leptospira interrogans serogroup Icterohaemorrhagiae serovar Lai (strain 56601), this protein is Argininosuccinate synthase.